A 476-amino-acid polypeptide reads, in one-letter code: MKLDLTVLEQARLLVVGDVMLDRYWHGGTSRISPEAPVPVVKVGESEDRPGGAANVALNIAALGAHAALAGVVGEDENADLLAARLEACDVSTYFYRSPEIPTITKLRVMSRNQQLLRLDFEESLWEIDTQGLTERVEAALPEADVVILSDYGKGSLNRVETLIATARGAGKRVLVDPKGHDFAKYRGASIITPNLGEFEAVVGPCPDDATLAEKGERLRAELELEALLVTRSEKGMTLIREGHAPLHLPTHAREVYDVTGAGDTVIGVLGLALAAGHGYPEAIMLANLAAGLVVAKPGTATLSIAELYTALHGDKLAEFGPIEESALIDAVRAAKLRGERVVMTNGCFDILHAGHVAYLEQAKRLGDRLVVAVNDDASVGRLKGPKRPINALERRMQVLAGLSAVDWVVPFGEETPARLIAEVLPDVLVKGGDYRPEDIAGGEAVMAAGGEVRVLNFEDGVSTTAMIDTILDREG.

Residues 1–318 (MKLDLTVLEQ…YTALHGDKLA (318 aa)) are ribokinase. 195–198 (NLGE) lines the ATP pocket. Asp-264 is a catalytic residue. The interval 344-476 (MTNGCFDILH…MIDTILDREG (133 aa)) is cytidylyltransferase.

The protein in the N-terminal section; belongs to the carbohydrate kinase PfkB family. This sequence in the C-terminal section; belongs to the cytidylyltransferase family. As to quaternary structure, homodimer.

The catalysed reaction is D-glycero-beta-D-manno-heptose 7-phosphate + ATP = D-glycero-beta-D-manno-heptose 1,7-bisphosphate + ADP + H(+). It carries out the reaction D-glycero-beta-D-manno-heptose 1-phosphate + ATP + H(+) = ADP-D-glycero-beta-D-manno-heptose + diphosphate. The protein operates within nucleotide-sugar biosynthesis; ADP-L-glycero-beta-D-manno-heptose biosynthesis; ADP-L-glycero-beta-D-manno-heptose from D-glycero-beta-D-manno-heptose 7-phosphate: step 1/4. It participates in nucleotide-sugar biosynthesis; ADP-L-glycero-beta-D-manno-heptose biosynthesis; ADP-L-glycero-beta-D-manno-heptose from D-glycero-beta-D-manno-heptose 7-phosphate: step 3/4. In terms of biological role, catalyzes the phosphorylation of D-glycero-D-manno-heptose 7-phosphate at the C-1 position to selectively form D-glycero-beta-D-manno-heptose-1,7-bisphosphate. Catalyzes the ADP transfer from ATP to D-glycero-beta-D-manno-heptose 1-phosphate, yielding ADP-D-glycero-beta-D-manno-heptose. The protein is Bifunctional protein HldE of Chromohalobacter salexigens (strain ATCC BAA-138 / DSM 3043 / CIP 106854 / NCIMB 13768 / 1H11).